A 125-amino-acid polypeptide reads, in one-letter code: UPF0332 protein AF_0298 (125 aa).

Belongs to the UPF0332 family.

In Archaeoglobus fulgidus (strain ATCC 49558 / DSM 4304 / JCM 9628 / NBRC 100126 / VC-16), this protein is UPF0332 protein AF_0298.